We begin with the raw amino-acid sequence, 299 residues long: Nicotinate-nucleotide pyrophosphorylase [carboxylating] (299 aa).

An important for hexamer formation region spans residues 8–12 (HLLPP). Residues R102, 138 to 139 (RK), 160 to 161 (HR), K171, E201, D222, 248 to 250 (SGG), and G270 contribute to the quinolinate site. T291 is subject to Phosphothreonine.

Belongs to the NadC/ModD family. In terms of assembly, hexamer formed by 3 homodimers.

It carries out the reaction nicotinate beta-D-ribonucleotide + CO2 + diphosphate = quinolinate + 5-phospho-alpha-D-ribose 1-diphosphate + 2 H(+). The protein operates within cofactor biosynthesis; NAD(+) biosynthesis; nicotinate D-ribonucleotide from quinolinate: step 1/1. Functionally, involved in the catabolism of quinolinic acid (QA). The chain is Nicotinate-nucleotide pyrophosphorylase [carboxylating] (QPRT) from Bos taurus (Bovine).